A 345-amino-acid polypeptide reads, in one-letter code: Phosphoribosylformylglycinamidine cyclo-ligase (345 aa).

The protein belongs to the AIR synthase family.

Its subcellular location is the cytoplasm. The catalysed reaction is 2-formamido-N(1)-(5-O-phospho-beta-D-ribosyl)acetamidine + ATP = 5-amino-1-(5-phospho-beta-D-ribosyl)imidazole + ADP + phosphate + H(+). The protein operates within purine metabolism; IMP biosynthesis via de novo pathway; 5-amino-1-(5-phospho-D-ribosyl)imidazole from N(2)-formyl-N(1)-(5-phospho-D-ribosyl)glycinamide: step 2/2. In Escherichia coli (strain SE11), this protein is Phosphoribosylformylglycinamidine cyclo-ligase.